The chain runs to 109 residues: FK506-binding protein (109 aa).

In terms of domain architecture, PPIase FKBP-type spans Gly-20–Tyr-108.

The protein belongs to the FKBP-type PPIase family.

It catalyses the reaction [protein]-peptidylproline (omega=180) = [protein]-peptidylproline (omega=0). PPIases accelerate the folding of proteins. This Neisseria meningitidis serogroup C protein is FK506-binding protein (fbp).